The following is a 116-amino-acid chain: Putative serine proteinase inhibitor 2 homolog first part (116 aa).

Belongs to the serpin family. Poxviruses subfamily.

The chain is Putative serine proteinase inhibitor 2 homolog first part from Vaccinia virus (strain Copenhagen) (VACV).